The chain runs to 353 residues: Guanine nucleotide-binding protein subunit alpha (353 aa).

Residue glycine 2 is the site of N-myristoyl glycine attachment. A lipid anchor (S-palmitoyl cysteine) is attached at cysteine 3. Residues 32–353 enclose the G-alpha domain; that stretch reads NEIKMLLLGA…QENLRLCGLI (322 aa). The G1 motif stretch occupies residues 35-48; that stretch reads KMLLLGAGESGKST. GTP is bound by residues glutamate 43, serine 44, glycine 45, lysine 46, serine 47, threonine 48, aspartate 150, leucine 175, threonine 181, glycine 203, asparagine 269, lysine 270, aspartate 272, and alanine 325. Serine 47 provides a ligand contact to Mg(2+). The tract at residues 173–181 is G2 motif; the sequence is DVLRSRVKT. Threonine 181 provides a ligand contact to Mg(2+). A G3 motif region spans residues 196–205; the sequence is YRMFDVGGQR. The interval 265-272 is G4 motif; that stretch reads ILFLNKID. The segment at 323-328 is G5 motif; the sequence is TCATDT.

It belongs to the G-alpha family. G(q) subfamily. As to quaternary structure, g proteins are composed of 3 units; alpha, beta and gamma. The alpha chain contains the guanine nucleotide binding site. It depends on Mg(2+) as a cofactor.

Guanine nucleotide-binding proteins (G proteins) are involved as modulators or transducers in various transmembrane signaling systems. Involved in the mating pathway. The sequence is that of Guanine nucleotide-binding protein subunit alpha (CGA1) from Cochliobolus heterostrophus (strain C4 / ATCC 48331 / race T) (Southern corn leaf blight fungus).